The following is a 258-amino-acid chain: Regulatory protein RecX (258 aa).

It belongs to the RecX family.

The protein localises to the cytoplasm. In terms of biological role, modulates RecA activity. This chain is Regulatory protein RecX, found in Streptococcus equi subsp. equi (strain 4047).